The following is a 547-amino-acid chain: Sterol carrier protein 2 (547 aa).

A phosphoserine mark is found at Ser3 and Ser8. Lys40 bears the N6-succinyllysine mark. The residue at position 132 (Lys132) is an N6-acetyllysine; alternate. Lys132 carries the post-translational modification N6-succinyllysine; alternate. Lys168 bears the N6-succinyllysine mark. Lys177 is subject to N6-acetyllysine. Lys183 bears the N6-acetyllysine; alternate mark. Residue Lys183 is modified to N6-succinyllysine; alternate. N6-succinyllysine is present on residues Lys211 and Lys282. An N6-acetyllysine; alternate mark is found at Lys341, Lys432, Lys438, Lys443, and Lys453. N6-succinyllysine; alternate occurs at positions 341, 432, 438, 443, and 453. The region spanning 433–543 (ANLIFKEIEK…KLQSLQLQPD (111 aa)) is the SCP2 domain. Position 464 is an N6-succinyllysine (Lys464). Lys470 carries the N6-acetyllysine; alternate modification. N6-succinyllysine; alternate is present on Lys470. The residue at position 479 (Lys479) is an N6-succinyllysine. N6-acetyllysine is present on Lys491. 2 positions are modified to N6-succinyllysine: Lys492 and Lys511. The residue at position 516 (Ser516) is a Phosphoserine. An N6-succinyllysine mark is found at Lys522 and Lys534. Ser537 is modified (phosphoserine). Position 544 is an N6-succinyllysine (Lys544). Positions 545–547 (AKL) match the Microbody targeting signal motif.

This sequence in the N-terminal section; belongs to the thiolase-like superfamily. Thiolase family. Interacts with PEX5; the interaction is essential for peroxisomal import. PreSCP2, a protein with a molecular mass of about 15 kDa, is processed into its mature form (SCP2) by proteolytic cleavage of a 20 residue leader sequence after translocation into peroxisomes. In terms of tissue distribution, liver &gt; intestine &gt; brain &gt; lung, colon, stomach, spleen, kidney, heart and ovary. As to expression, expressed in liver (at protein level).

The protein localises to the peroxisome. Its subcellular location is the cytoplasm. It localises to the mitochondrion. The enzyme catalyses an acyl-CoA + acetyl-CoA = a 3-oxoacyl-CoA + CoA. The catalysed reaction is choloyl-CoA + propanoyl-CoA = 3alpha,7alpha,12alpha-trihydroxy-24-oxo-5beta-cholestan-26-oyl-CoA + CoA. It carries out the reaction 4,8,12-trimethyltridecanoyl-CoA + propanoyl-CoA = 3-oxopristanoyl-CoA + CoA. It catalyses the reaction hexanoyl-CoA + acetyl-CoA = 3-oxooctanoyl-CoA + CoA. The enzyme catalyses tetradecanoyl-CoA + acetyl-CoA = 3-oxohexadecanoyl-CoA + CoA. The catalysed reaction is 3-oxohexadecanedioyl-CoA + CoA = tetradecanedioyl-CoA + acetyl-CoA. It carries out the reaction propanoyl-CoA + tetradecanoyl-CoA = 3-oxo-2-methylhexadecanoyl-CoA + CoA. It catalyses the reaction butanoyl-CoA + acetyl-CoA = 3-oxohexanoyl-CoA + CoA. The enzyme catalyses octanoyl-CoA + acetyl-CoA = 3-oxodecanoyl-CoA + CoA. The catalysed reaction is decanoyl-CoA + acetyl-CoA = 3-oxododecanoyl-CoA + CoA. It carries out the reaction dodecanoyl-CoA + acetyl-CoA = 3-oxotetradecanoyl-CoA + CoA. It catalyses the reaction hexadecanoyl-CoA + acetyl-CoA = 3-oxooctadecanoyl-CoA + CoA. The enzyme catalyses 3-oxo-(9Z-octadecenoyl)-CoA + CoA = (7Z)-hexadecenoyl-CoA + acetyl-CoA. The catalysed reaction is 7-dehydrocholesterol(in) = 7-dehydrocholesterol(out). Plays a crucial role in the peroxisomal oxidation of branched-chain fatty acids. Catalyzes the last step of the peroxisomal beta-oxidation of branched chain fatty acids and the side chain of the bile acid intermediates di- and trihydroxycoprostanic acids (DHCA and THCA). Also active with medium and long straight chain 3-oxoacyl-CoAs. Stimulates the microsomal conversion of 7-dehydrocholesterol to cholesterol and transfers phosphatidylcholine and 7-dehydrocholesterol between membrances, in vitro. Isoforms SCP2 and SCPx cooperate in peroxisomal oxidation of certain naturally occurring tetramethyl-branched fatty acyl-CoAs. In terms of biological role, mediates the transfer of all common phospholipids, cholesterol and gangliosides from the endoplasmic reticulum to the plasma membrane. May play a role in regulating steroidogenesis. Stimulates the microsomal conversion of 7-dehydrocholesterol to cholesterol. Also binds fatty acids and fatty acyl Coenzyme A (CoA) such as phytanoyl-CoA. Involved in the regulation phospholipid synthesis in endoplasmic reticulum enhancing the incorporation of exogenous fatty acid into glycerides. Seems to stimulate the rate-limiting step in phosphatidic acid formation mediated by GPAT3. Isoforms SCP2 and SCPx cooperate in peroxisomal oxidation of certain naturally occurring tetramethyl-branched fatty acyl-CoAs. The sequence is that of Sterol carrier protein 2 from Rattus norvegicus (Rat).